A 589-amino-acid chain; its full sequence is Aspartate--tRNA ligase (589 aa).

Glu171 contributes to the L-aspartate binding site. Residues Gln195–Lys198 are aspartate. Arg217 provides a ligand contact to L-aspartate. ATP contacts are provided by residues Arg217–Glu219 and Gln226. An L-aspartate-binding site is contributed by His448. Glu482 serves as a coordination point for ATP. Arg489 is a binding site for L-aspartate. Position 534-537 (Gly534–Arg537) interacts with ATP.

Belongs to the class-II aminoacyl-tRNA synthetase family. Type 1 subfamily. In terms of assembly, homodimer.

The protein resides in the cytoplasm. It carries out the reaction tRNA(Asp) + L-aspartate + ATP = L-aspartyl-tRNA(Asp) + AMP + diphosphate. In terms of biological role, catalyzes the attachment of L-aspartate to tRNA(Asp) in a two-step reaction: L-aspartate is first activated by ATP to form Asp-AMP and then transferred to the acceptor end of tRNA(Asp). This chain is Aspartate--tRNA ligase, found in Idiomarina loihiensis (strain ATCC BAA-735 / DSM 15497 / L2-TR).